The primary structure comprises 72 residues: Translation initiation factor IF-1 (72 aa).

Positions 1–72 constitute an S1-like domain; that stretch reads MAKDDVIEVE…TRGRITYRFK (72 aa).

It belongs to the IF-1 family. In terms of assembly, component of the 30S ribosomal translation pre-initiation complex which assembles on the 30S ribosome in the order IF-2 and IF-3, IF-1 and N-formylmethionyl-tRNA(fMet); mRNA recruitment can occur at any time during PIC assembly.

It is found in the cytoplasm. One of the essential components for the initiation of protein synthesis. Stabilizes the binding of IF-2 and IF-3 on the 30S subunit to which N-formylmethionyl-tRNA(fMet) subsequently binds. Helps modulate mRNA selection, yielding the 30S pre-initiation complex (PIC). Upon addition of the 50S ribosomal subunit IF-1, IF-2 and IF-3 are released leaving the mature 70S translation initiation complex. The polypeptide is Translation initiation factor IF-1 (Streptococcus gordonii (strain Challis / ATCC 35105 / BCRC 15272 / CH1 / DL1 / V288)).